The sequence spans 432 residues: Ribosomal protein uS12 methylthiotransferase RimO (432 aa).

The 119-residue stretch at 4 to 122 (NTIDIITLGC…LLADLGKAYK (119 aa)) folds into the MTTase N-terminal domain. 6 residues coordinate [4Fe-4S] cluster: Cys13, Cys51, Cys85, Cys146, Cys150, and Cys153. The Radical SAM core domain occupies 132–363 (TTPHHYAYLK…MALQQEIAGE (232 aa)). The region spanning 366–432 (QTKIGKEFKV…DDFDLYASIL (67 aa)) is the TRAM domain.

This sequence belongs to the methylthiotransferase family. RimO subfamily. Requires [4Fe-4S] cluster as cofactor.

The protein localises to the cytoplasm. The enzyme catalyses L-aspartate(89)-[ribosomal protein uS12]-hydrogen + (sulfur carrier)-SH + AH2 + 2 S-adenosyl-L-methionine = 3-methylsulfanyl-L-aspartate(89)-[ribosomal protein uS12]-hydrogen + (sulfur carrier)-H + 5'-deoxyadenosine + L-methionine + A + S-adenosyl-L-homocysteine + 2 H(+). Catalyzes the methylthiolation of an aspartic acid residue of ribosomal protein uS12. The chain is Ribosomal protein uS12 methylthiotransferase RimO from Phocaeicola vulgatus (strain ATCC 8482 / DSM 1447 / JCM 5826 / CCUG 4940 / NBRC 14291 / NCTC 11154) (Bacteroides vulgatus).